The sequence spans 88 residues: MAEKTFKVVSDSGIHARPATILVQTASKFNSEIQLEYNGKTVNLKSIMGVMSLGIPKGATIKITAEGADAAEAMAALTDTLAKEGLAE.

The HPr domain occupies 1–88; it reads MAEKTFKVVS…DTLAKEGLAE (88 aa). The residue at position 12 (S12) is a Phosphoserine. The Pros-phosphohistidine intermediate role is filled by H15. S46 is subject to Phosphoserine; by HPrK/P.

The protein belongs to the HPr family.

It is found in the cytoplasm. With respect to regulation, phosphorylation on Ser-46 inhibits the phosphoryl transfer from enzyme I to HPr. Its function is as follows. General (non sugar-specific) component of the phosphoenolpyruvate-dependent sugar phosphotransferase system (sugar PTS). This major carbohydrate active-transport system catalyzes the phosphorylation of incoming sugar substrates concomitantly with their translocation across the cell membrane. The phosphoryl group from phosphoenolpyruvate (PEP) is transferred to the phosphoryl carrier protein HPr by enzyme I. Phospho-HPr then transfers it to the PTS EIIA domain. In terms of biological role, P-Ser-HPr interacts with the catabolite control protein A (CcpA), forming a complex that binds to DNA at the catabolite response elements cre, operator sites preceding a large number of catabolite-regulated genes. Thus, P-Ser-HPr is a corepressor in carbon catabolite repression (CCR), a mechanism that allows bacteria to coordinate and optimize the utilization of available carbon sources. P-Ser-HPr also plays a role in inducer exclusion, in which it probably interacts with several non-PTS permeases and inhibits their transport activity. The sequence is that of Phosphocarrier protein HPr (ptsH) from Geobacillus stearothermophilus (Bacillus stearothermophilus).